The following is a 335-amino-acid chain: Pyridoxal 5'-phosphate synthase subunit PdxS (335 aa).

Asp-30 lines the D-ribose 5-phosphate pocket. The Schiff-base intermediate with D-ribose 5-phosphate role is filled by Lys-87. Gly-159 serves as a coordination point for D-ribose 5-phosphate. Arg-171 lines the D-glyceraldehyde 3-phosphate pocket. D-ribose 5-phosphate contacts are provided by residues Gly-257 and 278-279 (GS).

It belongs to the PdxS/SNZ family. In the presence of PdxT, forms a dodecamer of heterodimers.

It carries out the reaction aldehydo-D-ribose 5-phosphate + D-glyceraldehyde 3-phosphate + L-glutamine = pyridoxal 5'-phosphate + L-glutamate + phosphate + 3 H2O + H(+). It functions in the pathway cofactor biosynthesis; pyridoxal 5'-phosphate biosynthesis. Functionally, catalyzes the formation of pyridoxal 5'-phosphate from ribose 5-phosphate (RBP), glyceraldehyde 3-phosphate (G3P) and ammonia. The ammonia is provided by the PdxT subunit. Can also use ribulose 5-phosphate and dihydroxyacetone phosphate as substrates, resulting from enzyme-catalyzed isomerization of RBP and G3P, respectively. This chain is Pyridoxal 5'-phosphate synthase subunit PdxS, found in Pyrococcus furiosus (strain ATCC 43587 / DSM 3638 / JCM 8422 / Vc1).